The sequence spans 248 residues: 23S rRNA (guanosine-2'-O-)-methyltransferase RlmB (248 aa).

Residues Gly200, Ile220, and Leu229 each coordinate S-adenosyl-L-methionine.

This sequence belongs to the class IV-like SAM-binding methyltransferase superfamily. RNA methyltransferase TrmH family. RlmB subfamily.

Its subcellular location is the cytoplasm. It carries out the reaction guanosine(2251) in 23S rRNA + S-adenosyl-L-methionine = 2'-O-methylguanosine(2251) in 23S rRNA + S-adenosyl-L-homocysteine + H(+). Specifically methylates the ribose of guanosine 2251 in 23S rRNA. The chain is 23S rRNA (guanosine-2'-O-)-methyltransferase RlmB from Acinetobacter baylyi (strain ATCC 33305 / BD413 / ADP1).